The sequence spans 377 residues: Probable staphylococcal-like nuclease CAN3 (377 aa).

Gly2 carries N-myristoyl glycine lipidation. Cys7 carries the S-palmitoyl cysteine lipid modification. The interval Gly15–Pro57 is disordered. Residues Pro27–Pro38 are compositionally biased toward low complexity. Positions Asn177–Ser353 constitute a TNase-like domain. Position 190 (Asp190) interacts with Ca(2+). Arg260 is a catalytic residue. Asp265 provides a ligand contact to Ca(2+). Active-site residues include Glu268 and Arg302.

This sequence belongs to the thermonuclease family. It depends on Ca(2+) as a cofactor.

The protein localises to the cell membrane. In terms of biological role, enzyme that catalyzes the hydrolysis of both DNA and RNA at the 5' position of the phosphodiester bond. This chain is Probable staphylococcal-like nuclease CAN3, found in Oryza sativa subsp. japonica (Rice).